The chain runs to 794 residues: Zinc finger protein 148 (794 aa).

Lys6 participates in a covalent cross-link: Glycyl lysine isopeptide (Lys-Gly) (interchain with G-Cter in SUMO2). The residue at position 51 (Ser51) is a Phosphoserine. Residues Lys88, Lys115, and Lys132 each participate in a glycyl lysine isopeptide (Lys-Gly) (interchain with G-Cter in SUMO2) cross-link. A C2H2-type 1 zinc finger spans residues 171–193 (HVCEHCNAAFRTNYHLQRHVFIH). The residue at position 194 (Thr194) is a Phosphothreonine. 2 C2H2-type zinc fingers span residues 199–221 (FQCS…EKIH) and 227–249 (FRCD…KRTH). Ser250 is modified (phosphoserine). The C2H2-type 4 zinc-finger motif lies at 255 to 278 (YQCEYCLQYFSRTDRVLKHKRMCH). Residue Lys291 forms a Glycyl lysine isopeptide (Lys-Gly) (interchain with G-Cter in SUMO2) linkage. The segment at 298–338 (EEDSGFSTSPKDNSLPKKKRQKTEKKSSGMDKESSLDKSDL) is disordered. Phosphoserine is present on residues Ser301 and Ser306. A Glycyl lysine isopeptide (Lys-Gly) (interchain with G-Cter in SUMO2) cross-link involves residue Lys308. Positions 321–338 (EKKSSGMDKESSLDKSDL) are enriched in basic and acidic residues. A Glycyl lysine isopeptide (Lys-Gly) (interchain with G-Cter in SUMO1); alternate cross-link involves residue Lys356. Lys356 is covalently cross-linked (Glycyl lysine isopeptide (Lys-Gly) (interchain with G-Cter in SUMO2); alternate). Lys402 is covalently cross-linked (Glycyl lysine isopeptide (Lys-Gly) (interchain with G-Cter in SUMO2)). Ser412 is subject to Phosphoserine. Residues Lys421 and Lys424 each participate in a glycyl lysine isopeptide (Lys-Gly) (interchain with G-Cter in SUMO2) cross-link. The span at 575–588 (SSEVPEVTQSENVG) shows a compositional bias: polar residues. Residues 575-596 (SSEVPEVTQSENVGSSSQASSS) are disordered. Lys607 bears the N6-acetyllysine mark. A phosphoserine mark is found at Ser665 and Ser784. Residues 775–794 (NDNRAGMTSSPDATTGQTFG) form a disordered region.

The protein belongs to the krueppel C2H2-type zinc-finger protein family. In terms of assembly, interacts with HNRNPDL. Interacts with the 5FMC complex; the interaction requires association with CHTOP. Interacts with CAVIN1. In terms of processing, sumoylated with SUMO2. Desumoylated by SENP3, resulting in the stimulation of transcription of its target genes.

The protein localises to the nucleus. Its function is as follows. Involved in transcriptional regulation. Represses the transcription of a number of genes including gastrin, stromelysin and enolase. Binds to the G-rich box in the enhancer region of these genes. The polypeptide is Zinc finger protein 148 (ZNF148) (Bos taurus (Bovine)).